We begin with the raw amino-acid sequence, 75 residues long: Metallothionein-like protein 1 (75 aa).

Belongs to the metallothionein superfamily. Type 15 family.

In terms of biological role, metallothioneins have a high content of cysteine residues that bind various heavy metals. The chain is Metallothionein-like protein 1 from Cicer arietinum (Chickpea).